A 170-amino-acid chain; its full sequence is E1B protein, small T-antigen (170 aa).

Belongs to the adenoviridae E1B 19 kDa protein family.

The protein is E1B protein, small T-antigen of Canine adenovirus serotype 2 (CAdV-2).